A 143-amino-acid chain; its full sequence is Protein SLC31A2 (143 aa).

Over 1–22 the chain is Extracellular; the sequence is MPMHFIFSDEAVLLFDFWRVHS. Residues 23 to 43 form a helical membrane-spanning segment; sequence PTGMALSVLVVLLLAVLYEGI. Topologically, residues 44–93 are cytoplasmic; the sequence is KVGKAKLLHKTLESLPATNSQQFILGPDQDSTGSRSTSDNRTRLRWFLCY. The residue at position 75 (T75) is a Phosphothreonine. S77 is modified (phosphoserine). The helical transmembrane segment at 94–114 threads the bilayer; that stretch reads FGQSLVHVIQVVIGYFVMLAV. At 115–119 the chain is on the extracellular side; that stretch reads MSYNT. A helical membrane pass occupies residues 120 to 140; it reads WIFLGVVLGSAVGYYLAYPLL. Topologically, residues 141 to 143 are cytoplasmic; that stretch reads NMT.

Belongs to the copper transporter (Ctr) (TC 1.A.56) family. SLC31A subfamily. In terms of assembly, oligomer. Interacts with SLC31A1; this interaction stabilizes SLC31A2 and protects it from ubiquitination and the subsequent degradation. Post-translationally, ubiquitinated; ubiquitination and the subsequent proteasomal degradation are prevent by SLC31A1 that stabilizes it.

It is found in the membrane. Its subcellular location is the cytoplasmic vesicle membrane. The protein localises to the late endosome membrane. The protein resides in the lysosome membrane. It localises to the recycling endosome membrane. Does not function as a copper(1+) importer in vivo. However, in vitro functions as a low-affinity copper(1+) importer. Regulator of SLC31A1 which facilitates the cleavage of the SLC31A1 ecto-domain or which stabilizes the truncated form of SLC31A1 (Truncated CTR1 form), thereby drives the SLC31A1 truncated form-dependent endosomal copper export and modulates the copper and cisplatin accumulation via SLC31A1. This Mus musculus (Mouse) protein is Protein SLC31A2.